Reading from the N-terminus, the 2000-residue chain is Myosin-14 (2000 aa).

Alanine 2 carries the post-translational modification N-acetylalanine. Threonine 33 is subject to Phosphothreonine. The 51-residue stretch at 47–97 folds into the Myosin N-terminal SH3-like domain; the sequence is TARRMVWVPSELHGFEAAALRDEGEEEAEVELAESGRRLRLPRDQIQRMNP. Serine 56 is subject to Phosphoserine. A Myosin motor domain is found at 101-804; that stretch reads SKAEDMAELT…VLAQLEEERD (704 aa). Residue 194–201 coordinates ATP; the sequence is GESGAGKT. The segment at 682-704 is actin-binding; sequence LSRLMATLSNTNPSFVRCIVPNH. Residues 807–836 enclose the IQ domain; that stretch reads VTDIIVSFQAAARGYLARRAFQRRQQQQSA. Residues 866–1951 adopt a coiled-coil conformation; it reads LQVTRQDEVL…VTTLRNRLRR (1086 aa). At serine 925 the chain carries Phosphoserine. The interval 1173-1197 is disordered; that stretch reads RGELEDTLDSTNAQQELRSKREQEV. Position 1198 is a phosphothreonine (threonine 1198). Phosphoserine is present on residues serine 1249 and serine 1280. 5 disordered regions span residues 1260–1311, 1597–1629, 1720–1751, 1910–1942, and 1967–2000; these read ELSS…AELE, HERDLQGRDDAGEERRRQLAKQLRDAEVERDEE, SDRARRQAQQDRDEMAEEVASGNLSKAATLEE, AEEEASRAQAGRRRLQRELEDVTESAESMNREV, and LEEGVASDEEEAEGAEPGSAPGQEPEAPPPATPQ. The span at 1290 to 1304 shows a compositional bias: basic and acidic residues; sequence SDSERARSEAAEKLQ. Residues 1720-1732 show a composition bias toward basic and acidic residues; it reads SDRARRQAQQDRD. Residues 1971-1980 are compositionally biased toward acidic residues; that stretch reads VASDEEEAEG. Residues serine 1973 and serine 1985 each carry the phosphoserine modification. Over residues 1981–1991 the composition is skewed to low complexity; sequence AEPGSAPGQEP. A Phosphothreonine modification is found at threonine 1998.

The protein belongs to the TRAFAC class myosin-kinesin ATPase superfamily. Myosin family. In terms of assembly, myosin is a hexameric protein that consists of 2 heavy chain subunits (MHC), 2 alkali light chain subunits (MLC) and 2 regulatory light chain subunits (MLC-2). As to expression, highest levels in lung, kidney, brain and colon, very low levels in liver and bladder and no expression in spleen or seminal vesicle (at protein level). Isoform 1 is expressed in liver, kidney and testis with low levels in skeletal muscle and heart. Isoform 1 and isoform 2 are expressed in brain and lung. Isoform 2 is the main isoform expressed in skeletal muscle and heart. Isoform 3 is limited to brain stem, cerebellum and spinal cord.

In terms of biological role, cellular myosin that appears to play a role in cytokinesis, cell shape, and specialized functions such as secretion and capping. This Mus musculus (Mouse) protein is Myosin-14 (Myh14).